The primary structure comprises 396 residues: Dimethyladenosine transferase 2, mitochondrial (396 aa).

A mitochondrion-targeting transit peptide spans 1–19; it reads MWIPVVGLPRRLRLSALAG. A disordered region spans residues 44 to 64; it reads LSDSSPQLWPEPDFRNPPRKA. Positions 75, 124, and 150 each coordinate S-adenosyl-L-methionine. A DNA-binding region spans residues 330–331; the sequence is RR.

It belongs to the class I-like SAM-binding methyltransferase superfamily. rRNA adenine N(6)-methyltransferase family. KsgA subfamily. In terms of assembly, homodimer. Component of the mitochondrial transcription initiation complex, composed at least of TFB2M, TFAM and POLRMT. In this complex TFAM recruits POLRMT to the promoter whereas TFB2M induces structural changes in POLRMT to enable promoter opening and trapping of the DNA non-template strand. Interacts with mitochondrial RNA polymerase POLRMT. Interacts with TFAM. In terms of tissue distribution, ubiquitously expressed.

Its subcellular location is the mitochondrion. It catalyses the reaction adenosine in rRNA + S-adenosyl-L-methionine = N(6)-methyladenosine in rRNA + S-adenosyl-L-homocysteine + H(+). In terms of biological role, S-adenosyl-L-methionine-dependent rRNA methyltransferase which may methylate two specific adjacent adenosines in the loop of a conserved hairpin near the 3'-end of 12S mitochondrial rRNA. Component of the mitochondrial transcription initiation complex, composed at least of TFB2M, TFAM and POLRMT that is required for basal transcription of mitochondrial DNA. In this complex, TFAM recruits POLRMT to a specific promoter whereas TFB2M induces structural changes in POLRMT to enable promoter opening and trapping of the DNA non-template strand. Stimulates transcription independently of the methyltransferase activity. In Homo sapiens (Human), this protein is Dimethyladenosine transferase 2, mitochondrial.